The sequence spans 401 residues: Nicotinate phosphoribosyltransferase (401 aa).

His-221 is subject to Phosphohistidine; by autocatalysis.

The protein belongs to the NAPRTase family. Post-translationally, transiently phosphorylated on a His residue during the reaction cycle. Phosphorylation strongly increases the affinity for substrates and increases the rate of nicotinate D-ribonucleotide production. Dephosphorylation regenerates the low-affinity form of the enzyme, leading to product release.

The catalysed reaction is nicotinate + 5-phospho-alpha-D-ribose 1-diphosphate + ATP + H2O = nicotinate beta-D-ribonucleotide + ADP + phosphate + diphosphate. It participates in cofactor biosynthesis; NAD(+) biosynthesis; nicotinate D-ribonucleotide from nicotinate: step 1/1. Catalyzes the synthesis of beta-nicotinate D-ribonucleotide from nicotinate and 5-phospho-D-ribose 1-phosphate at the expense of ATP. This chain is Nicotinate phosphoribosyltransferase, found in Erwinia tasmaniensis (strain DSM 17950 / CFBP 7177 / CIP 109463 / NCPPB 4357 / Et1/99).